The sequence spans 251 residues: Probable transcriptional regulatory protein MLBr00475 (251 aa).

Belongs to the TACO1 family.

It is found in the cytoplasm. The protein is Probable transcriptional regulatory protein MLBr00475 of Mycobacterium leprae (strain Br4923).